The following is a 101-amino-acid chain: Small ribosomal subunit protein uS14 (101 aa).

This sequence belongs to the universal ribosomal protein uS14 family. Part of the 30S ribosomal subunit. Contacts proteins S3 and S10.

Its function is as follows. Binds 16S rRNA, required for the assembly of 30S particles and may also be responsible for determining the conformation of the 16S rRNA at the A site. The sequence is that of Small ribosomal subunit protein uS14 from Bartonella henselae (strain ATCC 49882 / DSM 28221 / CCUG 30454 / Houston 1) (Rochalimaea henselae).